The following is an 87-amino-acid chain: Cell division topological specificity factor (87 aa).

It belongs to the MinE family.

Functionally, prevents the cell division inhibition by proteins MinC and MinD at internal division sites while permitting inhibition at polar sites. This ensures cell division at the proper site by restricting the formation of a division septum at the midpoint of the long axis of the cell. The polypeptide is Cell division topological specificity factor (Rhizobium meliloti (strain 1021) (Ensifer meliloti)).